Consider the following 128-residue polypeptide: Transcription antitermination protein NusB (128 aa).

The protein belongs to the NusB family.

Involved in transcription antitermination. Required for transcription of ribosomal RNA (rRNA) genes. Binds specifically to the boxA antiterminator sequence of the ribosomal RNA (rrn) operons. In Listeria monocytogenes serotype 4a (strain HCC23), this protein is Transcription antitermination protein NusB.